A 323-amino-acid polypeptide reads, in one-letter code: Phosphatidylglycerol--prolipoprotein diacylglyceryl transferase (323 aa).

Helical transmembrane passes span 15 to 35 (VIQGIPITWYSLSYIFIILIS), 58 to 78 (FMFSLVLGAILGGRLASTLVY), and 106 to 126 (GMAIHGGFLGAIIAPLITINT). Arginine 156 contributes to the a 1,2-diacyl-sn-glycero-3-phospho-(1'-sn-glycerol) binding site. Transmembrane regions (helical) follow at residues 242–262 (GFIFGVYIMLYAFFRFFIEYL) and 289–309 (ISMGQILSLALMLSGLIWIIV).

It belongs to the Lgt family.

Its subcellular location is the cell inner membrane. The catalysed reaction is L-cysteinyl-[prolipoprotein] + a 1,2-diacyl-sn-glycero-3-phospho-(1'-sn-glycerol) = an S-1,2-diacyl-sn-glyceryl-L-cysteinyl-[prolipoprotein] + sn-glycerol 1-phosphate + H(+). It participates in protein modification; lipoprotein biosynthesis (diacylglyceryl transfer). Its function is as follows. Catalyzes the transfer of the diacylglyceryl group from phosphatidylglycerol to the sulfhydryl group of the N-terminal cysteine of a prolipoprotein, the first step in the formation of mature lipoproteins. This Borreliella afzelii (strain PKo) (Borrelia afzelii) protein is Phosphatidylglycerol--prolipoprotein diacylglyceryl transferase.